Reading from the N-terminus, the 194-residue chain is Protein GrpE (194 aa).

A compositionally biased stretch (basic and acidic residues) spans 1–12 (MNKQKNNRERTP). The interval 1-44 (MNKQKNNRERTPQPEQDTERDEQLTNSHENDIDSAPAAEENDKV) is disordered.

The protein belongs to the GrpE family. As to quaternary structure, homodimer.

It is found in the cytoplasm. Functionally, participates actively in the response to hyperosmotic and heat shock by preventing the aggregation of stress-denatured proteins, in association with DnaK and GrpE. It is the nucleotide exchange factor for DnaK and may function as a thermosensor. Unfolded proteins bind initially to DnaJ; upon interaction with the DnaJ-bound protein, DnaK hydrolyzes its bound ATP, resulting in the formation of a stable complex. GrpE releases ADP from DnaK; ATP binding to DnaK triggers the release of the substrate protein, thus completing the reaction cycle. Several rounds of ATP-dependent interactions between DnaJ, DnaK and GrpE are required for fully efficient folding. The sequence is that of Protein GrpE from Porphyromonas gingivalis (strain ATCC 33277 / DSM 20709 / CIP 103683 / JCM 12257 / NCTC 11834 / 2561).